We begin with the raw amino-acid sequence, 219 residues long: Abasic site processing protein YobE (219 aa).

The active-site Nucleophile is Cys2. Residue Cys2 is modified to Thiazolidine linkage to a ring-opened DNA abasic site. Glu106 is an active-site residue.

It belongs to the SOS response-associated peptidase family.

Formation and reversal of DNA-protein cross-link depends on DNA context. Catalyzes formation of the thiazolidine linkage in presence of abasic sites in single-stranded DNA. Mediates the reversal of the thiazolidine cross-link in presence of double stranded DNA. Its function is as follows. Sensor of abasic sites in single-stranded DNA (ssDNA) required to preserve genome integrity by promoting error-free repair of abasic sites. Recognizes and binds abasic sites in ssDNA at replication forks and chemically modifies the lesion by forming a covalent cross-link with DNA: forms a stable thiazolidine linkage between a ring-opened abasic site and the alpha-amino and sulfhydryl substituents of its N-terminal catalytic cysteine residue. The DNA-protein cross-link is then reversed: able to catalyze the reversal of the thiazolidine cross-link and cycle between a cross-link and a non-cross-linked state depending on DNA context: mediates self-reversal of the thiazolidine cross-link in double stranded DNA. May act as a protease: mediates autocatalytic processing of its N-terminal methionine in order to expose the catalytic cysteine. The protein is Abasic site processing protein YobE (yobE) of Bacillus subtilis (strain 168).